Reading from the N-terminus, the 83-residue chain is Neurotoxin LmNaTx34.5 (83 aa).

The N-terminal stretch at 1-15 (FILVVIALMVIEVKS) is a signal peptide. The region spanning 16–82 (DGYLMVRAGR…IWTYEKNTCS (67 aa)) is the LCN-type CS-alpha/beta domain. 4 disulfide bridges follow: cysteine 29–cysteine 81, cysteine 33–cysteine 54, cysteine 40–cysteine 61, and cysteine 44–cysteine 63.

This sequence belongs to the long (4 C-C) scorpion toxin superfamily. Sodium channel inhibitor family. Beta subfamily. Expressed by the venom gland.

It is found in the secreted. In terms of biological role, binds voltage-independently at site-4 of sodium channels (Nav) and shift the voltage of activation toward more negative potentials thereby affecting sodium channel activation and promoting spontaneous and repetitive firing. The polypeptide is Neurotoxin LmNaTx34.5 (Lychas mucronatus (Chinese swimming scorpion)).